Consider the following 300-residue polypeptide: Epimerase family protein SAR0825 (300 aa).

Belongs to the NAD(P)-dependent epimerase/dehydratase family. SDR39U1 subfamily.

The polypeptide is Epimerase family protein SAR0825 (Staphylococcus aureus (strain MRSA252)).